Reading from the N-terminus, the 244-residue chain is Serine-rich single-pass membrane protein 1 (244 aa).

Residues 35–55 (CGTIGSFLLWYFVIVFVLMFF) traverse the membrane as a helical segment. 3 disordered regions span residues 65-114 (DKKD…PVTN), 126-191 (QRRA…LGSY), and 210-244 (LAHHSRQKPSVTPPMKRDSQEESSISDINKKFSKF). Residues 80–94 (ASKETSCKRQSKDSA) are compositionally biased toward basic and acidic residues. Polar residues-rich tracts occupy residues 96–114 (DPSQTMKKPKQNQLTPVTN) and 132–142 (QSQFNEVNQNQ). The segment covering 161–176 (SWKESESEHHPSPDSI) has biased composition (basic and acidic residues).

It localises to the membrane. This Homo sapiens (Human) protein is Serine-rich single-pass membrane protein 1 (SSMEM1).